A 993-amino-acid polypeptide reads, in one-letter code: ATP-dependent DNA helicase MPH1 (993 aa).

The region spanning 94-261 (IVHKSLFQNT…EVVNNLDISK (168 aa)) is the Helicase ATP-binding domain. 107 to 114 (IPTGMGKT) contributes to the ATP binding site. Positions 209-212 (DEAH) match the DEAH box motif. The Helicase C-terminal domain occupies 507–655 (KVERLHRQEQ…CIDYKKSDRI (149 aa)). The disordered stretch occupies residues 530–551 (NDKLERSARRTGSSEEAQISGM). A compositionally biased stretch (polar residues) spans 539-551 (RTGSSEEAQISGM).

This sequence belongs to the DEAD box helicase family. DEAH subfamily. FANCM sub-subfamily. As to quaternary structure, interacts with the MHF histone-fold complex to form the FANCM-MHF complex.

The protein resides in the nucleus. The enzyme catalyses ATP + H2O = ADP + phosphate + H(+). ATP-dependent DNA helicase involved in DNA damage repair by homologous recombination and in genome maintenance. Capable of unwinding D-loops. Plays a role in limiting crossover recombinants during mitotic DNA double-strand break (DSB) repair. Component of a FANCM-MHF complex which promotes gene conversion at blocked replication forks, probably by reversal of the stalled fork. This chain is ATP-dependent DNA helicase MPH1, found in Saccharomyces cerevisiae (strain YJM789) (Baker's yeast).